Consider the following 246-residue polypeptide: tRNA pseudouridine synthase A (246 aa).

The active-site Nucleophile is Asp-52. Tyr-111 contributes to the substrate binding site.

It belongs to the tRNA pseudouridine synthase TruA family. In terms of assembly, homodimer.

The enzyme catalyses uridine(38/39/40) in tRNA = pseudouridine(38/39/40) in tRNA. Its function is as follows. Formation of pseudouridine at positions 38, 39 and 40 in the anticodon stem and loop of transfer RNAs. The chain is tRNA pseudouridine synthase A from Parvibaculum lavamentivorans (strain DS-1 / DSM 13023 / NCIMB 13966).